Consider the following 79-residue polypeptide: Large ribosomal subunit protein bL31 (79 aa).

The protein belongs to the bacterial ribosomal protein bL31 family. Type A subfamily. In terms of assembly, part of the 50S ribosomal subunit.

Functionally, binds the 23S rRNA. The polypeptide is Large ribosomal subunit protein bL31 (Nostoc sp. (strain PCC 7120 / SAG 25.82 / UTEX 2576)).